A 283-amino-acid chain; its full sequence is N-terminal Xaa-Pro-Lys N-methyltransferase 2 (283 aa).

Residues G124, R129, D146, 174–175 (LQ), and Q190 contribute to the S-adenosyl-L-methionine site.

The protein belongs to the methyltransferase superfamily. NTM1 family.

Its subcellular location is the nucleus. It carries out the reaction N-terminal L-alanyl-L-prolyl-L-lysyl-[protein] + S-adenosyl-L-methionine = N-terminal N-methyl-L-alanyl-L-prolyl-L-lysyl-[protein] + S-adenosyl-L-homocysteine + H(+). The catalysed reaction is N-terminal L-prolyl-L-prolyl-L-lysyl-[protein] + S-adenosyl-L-methionine = N-terminal N-methyl-L-prolyl-L-prolyl-L-lysyl-[protein] + S-adenosyl-L-homocysteine + H(+). It catalyses the reaction N-terminal L-seryl-L-prolyl-L-lysyl-[protein] + S-adenosyl-L-methionine = N-terminal N-methyl-L-seryl-L-prolyl-L-lysyl-[protein] + S-adenosyl-L-homocysteine + H(+). Alpha N-methyltransferase that methylates the N-terminus of target proteins containing the N-terminal motif [Ala/Pro/Ser]-Pro-Lys when the initiator Met is cleaved. Specifically catalyzes monomethylation of exposed alpha-amino group of Ala or Ser residue in the [Ala/Ser]-Pro-Lys motif and Pro in the Pro-Pro-Lys motif. Predominantly functions as a mono-methyltransferase but is also able to di-/tri-methylate the GPKRIA peptide and di-methylate the PPKRIA peptide (in vitro). May activate NTMT1 by priming its substrates for trimethylation. This is N-terminal Xaa-Pro-Lys N-methyltransferase 2 (Ntmt2) from Mus musculus (Mouse).